The following is a 2121-amino-acid chain: MEGSSLNVAAPVFKPSGAANSFTPAPSQPAPPTLLSSSGPDAAVHAPDHLSPSTMLSQIQNQMASGGGVPGGMIHMNASSRPFVPGTAVKPSIVEPPTPIPYHPPLSSFANASRSPVPQHRLGHALNPGSVQLTGLPTFLATPPVINHMPHMSRSPSYTGPPSPISPNFSGAASPFVMPPAQMSYGLPLPAGLMNGNMKPRRAKGLPPVTPLKTTGHNSTPSISMNPAAFAANLAALKARKKVVVCLPAEQLLPDDEALLAQPEDESLGEEVKSDVDGVETGARASEPGSAKSRHARASALTRSRWVQRQPLSSDKHDLVPFFEAPREEIVTCDIHPEPWPYSLGLPDTIEIYLPGMSAWDEYLELRYEEQQMEAATTDHEPRSPLAHQGIPLPPSTAGFTFDRRGRSLSISTPADPGMVTFKLNRFLESQQQQLSQYDSDQVCGLDSAQNFGDADKPFGRFQTDLPNRLREAFARRRGDSSDLNLRPSLKTTHNHTMSLGLPSSGGPFGPEVFSALDMIRANSDEGPSKPPSEAQDLPQKPLSDTEAFAGKSEIYLSNIAEEDGEQEPSAELAVEGHTRVGSWKDLGRGFGYEPQSPNAAPNGTTSKHVRQASRFSVNTSRHDGEENDELGFDGEEAEIRTNPSEDADASDFEEEPNEYGADHWRSRHNSVHLSAFGDGHDRYADDNQSHASNDDSLQDSLTPSDEQFSNPSDEEAAREERILRRQHRAAERAARRERKQRQRGRAYSDNTLPSSSIGEADIHHNGVYGQDEQQRNPRNGNTISNPSEQEHCDIDDDSQTFGHNDRSNMPDQGPQFSRDFRFPPLNPCTVDVDPQVQSSSVHSGNCPPMSGTLGRASGISLLNPDAKEFKFGGTSASTRSVSAPQPSMQTAPEAAGAHFRLPSIKTSSFGSSALGDAPTNAAHLNVGAAPFTPGLFTFKAIQRLQVPENSLSASPSIAVTSADGGADHRETENRDMQGREKRTRYGPIDYDSQDERSSVYSPSPPRPKASAATIEGPLRIFSSLARNSPQPFLPVGYSQQQRAVSHESRLTADAPSFVPTWAKSSQLLGGSTSFKRPSLPDWDQQGQQAVDKDLPSILDPTFFSRDVESKAIPVGRASKDDVRGAARPSLSSASTLASVDKQANKSAVEPSRAADVDSGQETSETHQAPFAWQPSASNRLAPRTQPMHIPSGPRSCHSPSISQTSDAGHVPSIRWGDRRTSSRMSMSSLDRRFRRSCRGKKGPDDVGGNDEDDYEDEEESVTDIIEEIVERMDKVLEGWAGKILDEVTIMGQVRPHPRNLASVSDFPLDQEKLVQDMFKRMEEALDSRLTPALFASHARRASDETQSTIRPLRQRNSSSDVKTANSSLADAPGEWDFDYVQDILDVKLGEFRNQIESTLAQVMAALDKNGHLGAAVKPNGNDKYTNDSGPLVDFAEVVTARLMTQLESTLQLHLHAAKEFQSASDVELQKAMQSKLDENLFLLSEKGATDRSSIQHMLESEMHGLERSFSKIVSSVEEHIRSALMLHLPPLLADKASSDGTLADRLTNQLGSALGPVLSEERRCMLEEHQRSRDLLLEALPSSTQIAQSTIKLVEPLVKSLKSEPIDSDALVKRLAEVIGKQSIEHLVDLNPVLALIEPLIVKHEEARAFSKKILQRQEDTERTLCELPGAINAKTEIFLSSANDTSERQGLILEKIAEIKAEIKDSSSTLSNAASLNTDALHRRLEDLAKDKILTRETAEKTLSELASVYQVLDSSYQALSRLEAQHTSSEESHRDATAWLEKQAQANADLAKELREAEARAARAEAGQAEAEAKLSSLGRESDSLRDQLAQLTAEFASFKAERTKEQEASEKAVADAMARVDRAEAASVETQDRMSRLLEQANVAEREAYDSAKSVLERASKAEGQVAALEKRIAEQDNKIGNLQQLSATQKQKAAQSHQKLAEGEKRVKELEGKAEELAEAAIRLRLLEEKANELEDVRRQLHDSVEREALMKKELTKYDDRFSEMETELVEIKDSFVERSVHEEVQRKYTESQKLVEQLEAKLQTLTASPLTFDGWEAVEKQKTGAWASMHAPRVHIEDVELVGRSSRSIRSVSFASTAGSQGKKEVEVDEGGWWS.

Positions 1–17 match the PAM2 1 motif; the sequence is MEGSSLNVAAPVFKPSG. Disordered regions lie at residues 14 to 46, 262 to 302, 375 to 397, 475 to 507, 522 to 543, and 586 to 819; these read KPSGAANSFTPAPSQPAPPTLLSSSGPDAAVHA, QPED…SALT, AATTDHEPRSPLAHQGIPLPPST, ARRRGDSSDLNLRPSLKTTHNHTMSLGLPSSGG, ANSDEGPSKPPSEAQDLPQKPL, and DLGR…QFSR. An effector domain region spans residues 339–599; the sequence is PWPYSLGLPD…GFGYEPQSPN (261 aa). The span at 596–607 shows a compositional bias: polar residues; sequence QSPNAAPNGTTS. Acidic residues-rich tracts occupy residues 626 to 637 and 646 to 658; these read EENDELGFDGEE and EDADASDFEEEPN. Over residues 679–689 the composition is skewed to basic and acidic residues; that stretch reads DGHDRYADDNQ. Positions 690–712 are enriched in polar residues; sequence SHASNDDSLQDSLTPSDEQFSNP. Basic and acidic residues predominate over residues 719-735; the sequence is REERILRRQHRAAERAA. Positions 736–745 are enriched in basic residues; that stretch reads RRERKQRQRG. 2 stretches are compositionally biased toward polar residues: residues 749–758 and 777–788; these read SDNTLPSSSI and NPRNGNTISNPS. 2 short sequence motifs (PAM2) span residues 858 to 874 and 920 to 937; these read SGISLLNPDAKEFKFGG and TNAAHLNVGAAPFTPGLF. Residues 950 to 960 are compositionally biased toward polar residues; that stretch reads NSLSASPSIAV. Residues 950 to 1012 form a disordered region; that stretch reads NSLSASPSIA…PSPPRPKASA (63 aa). The segment covering 966–981 has biased composition (basic and acidic residues); that stretch reads GADHRETENRDMQGRE. The PAM2 4 signature appears at 1046-1063; the sequence is SHESRLTADAPSFVPTWA. Disordered regions lie at residues 1076-1096, 1119-1261, and 1337-1369; these read KRPSLPDWDQQGQQAVDKDLP, SKDD…EEES, and SHARRASDETQSTIRPLRQRNSSSDVKTANSSL. Residues 1198-1207 show a composition bias toward polar residues; sequence HSPSISQTSD. The segment covering 1248–1261 has biased composition (acidic residues); the sequence is GGNDEDDYEDEEES. Polar residues predominate over residues 1345 to 1369; sequence ETQSTIRPLRQRNSSSDVKTANSSL. Residues 1783–2054 are a coiled coil; that stretch reads LEKQAQANAD…EAKLQTLTAS (272 aa). The tract at residues 2099-2121 is disordered; the sequence is SFASTAGSQGKKEVEVDEGGWWS. Positions 2118–2120 match the GWW motif; sequence GWW.

It belongs to the UPA1 PAM2 domain-binding protein family. As to quaternary structure, might form homodimers via its C-terminal coiled-coil domain. Part of large ribonucleoprotein complexes (mRNPs) containing RNA-binding proteins RRM4 and PAB1, endosome-binding protein UPA1, core scaffold protein UPA2 and associated factor GRP1. Interacts (via PAM2 motifs) with PAB1.

It is found in the cytoplasm. The protein localises to the cytoskeleton. It localises to the endosome. Its function is as follows. Core component of endosomal mRNA transport and appears to carry out crucial scaffolding functions. The endosomal mRNA transport regulates polarity of the infectious hyphae by transporting a broad spectrum of cargo mRNAs from the nucleus to cell poles. The chain is PAM2 domain-containing protein UPA2 from Mycosarcoma maydis (Corn smut fungus).